We begin with the raw amino-acid sequence, 140 residues long: UPF0306 protein YhbP (140 aa).

Belongs to the UPF0306 family.

The polypeptide is UPF0306 protein YhbP (Escherichia coli O6:H1 (strain CFT073 / ATCC 700928 / UPEC)).